Here is a 240-residue protein sequence, read N- to C-terminus: uncharacterized protein (240 aa).

Disordered regions lie at residues 99 to 121 (EPPT…SPEL) and 136 to 167 (ATVS…KRVH). Over residues 137-155 (TVSSPTSPRPITTESSRVS) the composition is skewed to polar residues.

This is an uncharacterized protein from Ictaluridae (bullhead catfishes).